Consider the following 1755-residue polypeptide: Gag-Pro-Pol polyprotein (1755 aa).

Gly2 carries N-myristoyl glycine; by host lipidation. Basic and acidic residues-rich tracts occupy residues 151–169 (YDEP…EKDH) and 178–191 (QRKE…KEKD). The segment at 151 to 191 (YDEPYEEKEKADKNEEKDHVRKIKKVVQRKENSEGKRKEKD) is disordered. A PTAP/PSAP motif motif is present at residues 305–308 (PSAP). 2 CCHC-type zinc fingers span residues 525-542 (PVCF…DCKD) and 552-569 (GLCP…ECKS). The disordered stretch occupies residues 572 to 631 (DKDGNPLPPLETNAENSKNLVKGQSPSPAQKGDGVKGSGLNPEAPPFTIHDLPRGTPGSA). Polar residues predominate over residues 584-599 (NAENSKNLVKGQSPSP). One can recognise a Peptidase A2 domain in the interval 766–841 (FLGLLDTGAD…LPFTLWGRDI (76 aa)). The Protease; shared with dimeric partner role is filled by Asp771. The Reverse transcriptase domain maps to 905-1093 (LQLGHLEESN…DNLKYLGTHI (189 aa)). Residues Asp970, Asp1045, Asp1046, Asp1316, Glu1346, Asp1366, and Asp1429 each contribute to the Mg(2+) site. One can recognise an RNase H type-1 domain in the interval 1307-1437 (LEKGIVIFTD…ADSLTRILTA (131 aa)). The Integrase-type zinc finger occupies 1436 to 1477 (TALESAQESHALHHQNAAALRFQFHITREQAREIVKLCPNCP). Residues His1445, His1449, Cys1473, and Cys1476 each contribute to the Zn(2+) site. The Integrase catalytic domain occupies 1490–1647 (RGLKPRVLWQ…TAAERHWGPI (158 aa)). Mg(2+) contacts are provided by Asp1501, Asp1558, and Glu1594. Positions 1653–1702 (PMVMWKDLLTGSWKGPDVLITAGRGYACVFPQDAETPIWVPDRFIRPFTE) form a DNA-binding region, integrase-type. The disordered stretch occupies residues 1699-1755 (PFTERKEATPTPGTAEKTPPRDEKDQQESPKNESSPHQREDGLATSAGVDLRSGGGP). The segment covering 1716 to 1740 (TPPRDEKDQQESPKNESSPHQREDG) has biased composition (basic and acidic residues).

This sequence belongs to the retroviral Pol polyprotein family. As to quaternary structure, homodimer; when myristoylated. Homodimer. In terms of assembly, homooctamer. As to quaternary structure, homotrimer. The cofactor is Mg(2+). Post-translationally, specific enzymatic cleavages in vivo yield mature proteins. Released by autocatalytic processing. In terms of processing, myristoylated. Myristoylation of the matrix (MA) domain mediates the transport and binding of Gag polyproteins to the host plasma membrane and is required for the assembly of viral particles.

The protein resides in the virion. It catalyses the reaction DNA(n) + a 2'-deoxyribonucleoside 5'-triphosphate = DNA(n+1) + diphosphate. The enzyme catalyses Endonucleolytic cleavage to 5'-phosphomonoester.. The catalysed reaction is dUTP + H2O = dUMP + diphosphate + H(+). With respect to regulation, inhibited by pepstatin A. In terms of biological role, matrix protein. Nucleocapsid protein p14: Binds strongly to viral nucleic acids and promote their aggregation. Also destabilizes the nucleic acids duplexes via highly structured zinc-binding motifs. Functionally, capsid protein. Its function is as follows. NC-dUTPase has dUTPase activity, thereby preventing incorporation of uracil into DNA. In terms of biological role, the aspartyl protease mediates proteolytic cleavages of Gag and Gag-Pol polyproteins during or shortly after the release of the virion from the plasma membrane. Cleavages take place as an ordered, step-wise cascade to yield mature proteins. This process is called maturation. Displays maximal activity during the budding process just prior to particle release from the cell. RT is a multifunctional enzyme that converts the viral dimeric RNA genome into dsDNA in the cytoplasm, shortly after virus entry into the cell. This enzyme displays a DNA polymerase activity that can copy either DNA or RNA templates, and a ribonuclease H (RNase H) activity that cleaves the RNA strand of RNA-DNA heteroduplexes in a partially processive 3' to 5' endonucleasic mode. Conversion of viral genomic RNA into dsDNA requires many steps. A tRNA binds to the primer-binding site (PBS) situated at the 5' end of the viral RNA. RT uses the 3' end of the tRNA primer to perfom a short round of RNA-dependent minus-strand DNA synthesis. The reading proceeds through the U5 region and ends after the repeated (R) region which is present at both ends of viral RNA. The portion of the RNA-DNA heteroduplex is digested by the RNase H, resulting in a ssDNA product attached to the tRNA primer. This ssDNA/tRNA hybridizes with the identical R region situated at the 3' end of viral RNA. This template exchange, known as minus-strand DNA strong stop transfer, can be either intra- or intermolecular. RT uses the 3' end of this newly synthesized short ssDNA to perfom the RNA-dependent minus-strand DNA synthesis of the whole template. RNase H digests the RNA template except for a polypurine tract (PPT) situated at the 5' end of the genome. It is not clear if both polymerase and RNase H activities are simultaneous. RNase H probably can proceed both in a polymerase-dependent (RNA cut into small fragments by the same RT performing DNA synthesis) and a polymerase-independent mode (cleavage of remaining RNA fragments by free RTs). Secondly, RT performs DNA-directed plus-strand DNA synthesis using the PPT that has not been removed by RNase H as primers. PPT and tRNA primers are then removed by RNase H. The 3' and 5' ssDNA PBS regions hybridize to form a circular dsDNA intermediate. Strand displacement synthesis by RT to the PBS and PPT ends produces a blunt ended, linear dsDNA copy of the viral genome that includes long terminal repeats (LTRs) at both ends. Functionally, catalyzes viral DNA integration into the host chromosome, by performing a series of DNA cutting and joining reactions. This Mus musculus (Mouse) protein is Gag-Pro-Pol polyprotein (gag-pro-pol).